The primary structure comprises 443 residues: MREIVHLQAGQCGNQIGAKFWEVISDEHGIDPTGSYHGDSDLQLERINVYYNEATGNKFVPRAILVDLEPGTMDSVRSGPFGQIFRPDNFVFGQSGAGNNWAKGHYTEGAELVDSVLDVVRKESESCDCLQGFQLTHSLGGGTGSGMGTLLISKIREEYPDRIMNTFSVMPSPKVSDTVVEPYNATLSVHQLVENTDETYCIDNEALYDICFRTLKLTTPTYGDLNHLVSATMSGVTTCLRFPGQLNADLRKLAVNMVPFPRLHFFMPGFAPLTSRGSQQYRALTVPELTQQMFDSKNMMAACDPRHGRYLTVAAIFRGRMSMKEVDEQMLNVQNKSSSYFVEWIPNNVKTAVCDIPPRGLKMSATFIGNSTAIQELFKRISEQFTAMFRRKAFLHWYTGEGMDEMEFTEAESNMNDLVSEYQQYQDATADEQGEFEEEEDEA.

The MREI motif motif lies at 1 to 4; it reads MREI. 8 residues coordinate GTP: Gln-11, Glu-69, Ser-138, Gly-142, Thr-143, Gly-144, Asn-204, and Asn-226. Glu-69 contributes to the Mg(2+) binding site. 5-glutamyl polyglutamate is present on Glu-438.

Belongs to the tubulin family. Dimer of alpha and beta chains. A typical microtubule is a hollow water-filled tube with an outer diameter of 25 nm and an inner diameter of 15 nM. Alpha-beta heterodimers associate head-to-tail to form protofilaments running lengthwise along the microtubule wall with the beta-tubulin subunit facing the microtubule plus end conferring a structural polarity. Microtubules usually have 13 protofilaments but different protofilament numbers can be found in some organisms and specialized cells. Requires Mg(2+) as cofactor. In terms of processing, some glutamate residues at the C-terminus are polyglycylated, resulting in polyglycine chains on the gamma-carboxyl group. Glycylation is mainly limited to tubulin incorporated into axonemes (cilia and flagella) whereas glutamylation is prevalent in neuronal cells, centrioles, axonemes, and the mitotic spindle. Both modifications can coexist on the same protein on adjacent residues, and lowering polyglycylation levels increases polyglutamylation, and reciprocally. The precise function of polyglycylation is still unclear. Post-translationally, some glutamate residues at the C-terminus are polyglutamylated, resulting in polyglutamate chains on the gamma-carboxyl group. Polyglutamylation plays a key role in microtubule severing by spastin (SPAST). SPAST preferentially recognizes and acts on microtubules decorated with short polyglutamate tails: severing activity by SPAST increases as the number of glutamates per tubulin rises from one to eight, but decreases beyond this glutamylation threshold. In terms of tissue distribution, nervous system specific.

It localises to the cytoplasm. The protein localises to the cytoskeleton. Functionally, tubulin is the major constituent of microtubules, a cylinder consisting of laterally associated linear protofilaments composed of alpha- and beta-tubulin heterodimers. Microtubules grow by the addition of GTP-tubulin dimers to the microtubule end, where a stabilizing cap forms. Below the cap, tubulin dimers are in GDP-bound state, owing to GTPase activity of alpha-tubulin. In Xenopus laevis (African clawed frog), this protein is Tubulin beta-2 chain (tubb2).